The following is a 241-amino-acid chain: Transcriptional regulatory protein SrrA (241 aa).

The Response regulatory domain occupies 4–117 (EILIVDDEDR…EVVLRVKALL (114 aa)). The residue at position 53 (Asp53) is a 4-aspartylphosphate. Residues 133-233 (RDVIEFKHLE…VWGVGYKFEV (101 aa)) constitute a DNA-binding region (ompR/PhoB-type).

Post-translationally, phosphorylated by SrrB.

It is found in the cytoplasm. In terms of biological role, member of the two-component regulatory system SrrA/SrrB, which is involved in the global regulation of staphylococcal virulence factors in response to environmental oxygen levels as well as biofilm formation. Also plays an essential role in host-derived nitric oxide resistance by regulating hmp/flavohemoglobin, an enzyme that detoxifies nitric oxide by converting it to nitrate. Functions as a transcription regulator by direct binding to promoter regions of target genes. The protein is Transcriptional regulatory protein SrrA (srrA) of Staphylococcus aureus (strain NCTC 8325 / PS 47).